The sequence spans 444 residues: DNA repair protein RadA (444 aa).

The C4-type zinc-finger motif lies at 8–25 (CSNCGNISPKWSGQCFDC). 89–96 (GDPGIGKS) is an ATP binding site. The RadA KNRFG motif signature appears at 248 to 252 (KNRFG). The tract at residues 347 to 444 (EVYLSIAGGL…HLKDLKEIIK (98 aa)) is lon-protease-like.

The protein belongs to the RecA family. RadA subfamily.

DNA-dependent ATPase involved in processing of recombination intermediates, plays a role in repairing DNA breaks. Stimulates the branch migration of RecA-mediated strand transfer reactions, allowing the 3' invading strand to extend heteroduplex DNA faster. Binds ssDNA in the presence of ADP but not other nucleotides, has ATPase activity that is stimulated by ssDNA and various branched DNA structures, but inhibited by SSB. Does not have RecA's homology-searching function. In Rickettsia conorii (strain ATCC VR-613 / Malish 7), this protein is DNA repair protein RadA.